We begin with the raw amino-acid sequence, 717 residues long: Polyribonucleotide nucleotidyltransferase (717 aa).

2 residues coordinate Mg(2+): Asp-487 and Asp-493. Residues 554–613 form the KH domain; that stretch reads PRITVINVPKDKIRDVIGTGGKVIREIVEYSGCKIDIEDDGTIKIAATSDEQAQKAIDRI. In terms of domain architecture, S1 motif spans 623-691; that stretch reads GQIYTGKVVK…DRGKVKLSMR (69 aa).

This sequence belongs to the polyribonucleotide nucleotidyltransferase family. Mg(2+) is required as a cofactor.

Its subcellular location is the cytoplasm. It catalyses the reaction RNA(n+1) + phosphate = RNA(n) + a ribonucleoside 5'-diphosphate. Functionally, involved in mRNA degradation. Catalyzes the phosphorolysis of single-stranded polyribonucleotides processively in the 3'- to 5'-direction. The sequence is that of Polyribonucleotide nucleotidyltransferase from Acidiphilium cryptum (strain JF-5).